We begin with the raw amino-acid sequence, 543 residues long: Chaperonin GroEL (543 aa).

Residues Thr-29 to Pro-32, Asp-86 to Thr-90, Gly-413, Asn-476 to Ala-478, and Asp-492 each bind ATP.

It belongs to the chaperonin (HSP60) family. Forms a cylinder of 14 subunits composed of two heptameric rings stacked back-to-back. Interacts with the co-chaperonin GroES.

The protein resides in the cytoplasm. The enzyme catalyses ATP + H2O + a folded polypeptide = ADP + phosphate + an unfolded polypeptide.. In terms of biological role, together with its co-chaperonin GroES, plays an essential role in assisting protein folding. The GroEL-GroES system forms a nano-cage that allows encapsulation of the non-native substrate proteins and provides a physical environment optimized to promote and accelerate protein folding. In Brevibacillus choshinensis, this protein is Chaperonin GroEL.